Consider the following 341-residue polypeptide: Cathepsin B-like cysteine proteinase 1 (341 aa).

The N-terminal stretch at M1–A19 is a signal peptide. A propeptide spans E20 to N88 (activation peptide). N-linked (GlcNAc...) asparagine glycosylation occurs at N103. Cystine bridges form between C104–C133, C116–C160, C152–C218, C153–C156, C189–C222, and C197–C209. Residue C119 is part of the active site. N202 is a glycosylation site (N-linked (GlcNAc...) asparagine). Catalysis depends on residues H288 and N308.

Belongs to the peptidase C1 family.

Functionally, expression of the protease correlates with blood-feeding and suggests a role for the protease in blood digestion. This is Cathepsin B-like cysteine proteinase 1 (CP-1) from Ostertagia ostertagi (Brown stomach worm).